The sequence spans 296 residues: 4-hydroxybenzoate octaprenyltransferase (296 aa).

8 consecutive transmembrane segments (helical) span residues 29 to 49 (IGVY…GKGA), 52 to 72 (LQTV…GCVI), 102 to 122 (ALVL…FTNA), 146 to 166 (YYPQ…AFTA), 169 to 189 (GELP…TVGY), 219 to 239 (VIIL…GARF), 241 to 261 (LGAC…WEFW), and 275 to 295 (FLHN…DYAV).

Belongs to the UbiA prenyltransferase family. Mg(2+) is required as a cofactor.

The protein localises to the cell inner membrane. It carries out the reaction all-trans-octaprenyl diphosphate + 4-hydroxybenzoate = 4-hydroxy-3-(all-trans-octaprenyl)benzoate + diphosphate. The protein operates within cofactor biosynthesis; ubiquinone biosynthesis. Catalyzes the prenylation of para-hydroxybenzoate (PHB) with an all-trans polyprenyl group. Mediates the second step in the final reaction sequence of ubiquinone-8 (UQ-8) biosynthesis, which is the condensation of the polyisoprenoid side chain with PHB, generating the first membrane-bound Q intermediate 3-octaprenyl-4-hydroxybenzoate. This Pseudomonas syringae pv. syringae (strain B728a) protein is 4-hydroxybenzoate octaprenyltransferase.